The following is a 179-amino-acid chain: Large ribosomal subunit protein uL6c (179 aa).

It belongs to the universal ribosomal protein uL6 family. Part of the 50S ribosomal subunit.

The protein resides in the plastid. Its subcellular location is the chloroplast. In terms of biological role, binds 23S rRNA. The chain is Large ribosomal subunit protein uL6c (rpl6) from Guillardia theta (Cryptophyte).